A 622-amino-acid chain; its full sequence is MSDIIRLLPDSVANQIAAGEVIQRPASVIKELVENAIDAGAQHVDVLVVDAGKTSIQVIDDGKGMSETDARLSFERHATSKIREAADLFALHTMGFRGEALASIAAVAQVELRTRMEGEELGTMLTISGSKVEGQEAVSCPKGSSFSVKNLFFNVPARRKFLKSNQTELSNILTEFERIVLVNPEVSFTLHHNGAELFNLPALQLRQRIMGVFGKKINQELLSLDVDTTMVRVSGFVGKPETARKKGARQYFFVNGRYMRHPYFHKAIMDAYEQLVPVGEQVSYFIYFEVDPANIDVNIHPTKTEIKFENEQAIWQILAAAVKETLGKFNAVPSIDFDTEGMPDIPAFDASPYTGIQPPKTTYNPDYNPFNVSAAPPSSYSKPSKDWEQLYAGLERHASSQNFHPDENDYRAEEASPAEENPGLYDHVEDSSVSEKSGQHYQFKGRFILTSVKSGLMIIDQQRAHIRILYDKYIDQISRRQGVSQGMLFPDIVQFPLSEVAILQEIMEDLSFLGFELTDLGGGSYAINGVPAGIEGLNPIDLIQNMVHTAMEKGGKVKEEVQSILALTLAKAAAIVPGQVLTNEEMTGLVDGLFAVATPNYTPDGKTVLSVINEDDLEKLFK.

Residues 399-414 are compositionally biased toward basic and acidic residues; that stretch reads SSQNFHPDENDYRAEE. Positions 399-422 are disordered; the sequence is SSQNFHPDENDYRAEEASPAEENP.

It belongs to the DNA mismatch repair MutL/HexB family.

In terms of biological role, this protein is involved in the repair of mismatches in DNA. It is required for dam-dependent methyl-directed DNA mismatch repair. May act as a 'molecular matchmaker', a protein that promotes the formation of a stable complex between two or more DNA-binding proteins in an ATP-dependent manner without itself being part of a final effector complex. This Phocaeicola vulgatus (strain ATCC 8482 / DSM 1447 / JCM 5826 / CCUG 4940 / NBRC 14291 / NCTC 11154) (Bacteroides vulgatus) protein is DNA mismatch repair protein MutL.